Reading from the N-terminus, the 274-residue chain is Ribosomal RNA small subunit methyltransferase A (274 aa).

S-adenosyl-L-methionine is bound by residues asparagine 17, leucine 19, glycine 44, glutamate 65, aspartate 89, and asparagine 111.

The protein belongs to the class I-like SAM-binding methyltransferase superfamily. rRNA adenine N(6)-methyltransferase family. RsmA subfamily.

The protein localises to the cytoplasm. The enzyme catalyses adenosine(1518)/adenosine(1519) in 16S rRNA + 4 S-adenosyl-L-methionine = N(6)-dimethyladenosine(1518)/N(6)-dimethyladenosine(1519) in 16S rRNA + 4 S-adenosyl-L-homocysteine + 4 H(+). Its function is as follows. Specifically dimethylates two adjacent adenosines (A1518 and A1519) in the loop of a conserved hairpin near the 3'-end of 16S rRNA in the 30S particle. May play a critical role in biogenesis of 30S subunits. The sequence is that of Ribosomal RNA small subunit methyltransferase A from Buchnera aphidicola subsp. Schizaphis graminum (strain Sg).